Reading from the N-terminus, the 346-residue chain is MIILGFESSCDETGVAAVCTERGLLAHALHTQIAMHQEYGGVVPELASRDHIRRVVPLTRQVLAEAGLTLADVGAVAYTAGPGLAGALLVGASVAQALAWSRALPAIGIHHLEGHLLSPLLAEPRPEFPFVALLVSGGHTQLMRVDGVGRYELLGETLDDAAGEAFDKSAKLMGLGYPGGPALARLAEQGDASRYDLPRPMLHSGDLDFSFSGLKTAVLTRVKAATRDGGELGEQDRADLAAATQAAIVEVLAAKAIRALKQTGLRRLVVAGGVGANALLRAHLARALKPLRAEAYFPPLSLCTDNGAMIAFAAAERVKAGLADLREGDHAFTVRPRWDLADIQAG.

Residues His111 and His115 each contribute to the Fe cation site. Substrate contacts are provided by residues 134–138 (LVSGG), Asp167, Gly180, and Asn277. Asp305 serves as a coordination point for Fe cation.

This sequence belongs to the KAE1 / TsaD family. Fe(2+) is required as a cofactor.

It is found in the cytoplasm. It carries out the reaction L-threonylcarbamoyladenylate + adenosine(37) in tRNA = N(6)-L-threonylcarbamoyladenosine(37) in tRNA + AMP + H(+). Functionally, required for the formation of a threonylcarbamoyl group on adenosine at position 37 (t(6)A37) in tRNAs that read codons beginning with adenine. Is involved in the transfer of the threonylcarbamoyl moiety of threonylcarbamoyl-AMP (TC-AMP) to the N6 group of A37, together with TsaE and TsaB. TsaD likely plays a direct catalytic role in this reaction. In Bordetella bronchiseptica (strain ATCC BAA-588 / NCTC 13252 / RB50) (Alcaligenes bronchisepticus), this protein is tRNA N6-adenosine threonylcarbamoyltransferase.